The primary structure comprises 212 residues: Probable GH family 25 lysozyme 2 (212 aa).

The N-terminal stretch at 1 to 19 is a signal peptide; the sequence is MRFIALLISFFALLKVISA. The Ch-type lysozyme domain occupies 20 to 212; that stretch reads ISGVDISSAS…GLGFDLNWYP (193 aa). Active-site residues include aspartate 24, aspartate 112, and glutamate 114.

The protein belongs to the glycosyl hydrolase 25 family.

It is found in the secreted. The catalysed reaction is Hydrolysis of (1-&gt;4)-beta-linkages between N-acetylmuramic acid and N-acetyl-D-glucosamine residues in a peptidoglycan and between N-acetyl-D-glucosamine residues in chitodextrins.. The polypeptide is Probable GH family 25 lysozyme 2 (Dictyostelium discoideum (Social amoeba)).